Here is a 539-residue protein sequence, read N- to C-terminus: Hydroxylamine reductase (539 aa).

Positions 3, 6, 14, and 20 each coordinate [4Fe-4S] cluster. Hybrid [4Fe-2O-2S] cluster-binding residues include H232, E256, C300, C392, C420, C445, E480, and K482. Cysteine persulfide is present on C392.

The protein belongs to the HCP family. [4Fe-4S] cluster is required as a cofactor. The cofactor is hybrid [4Fe-2O-2S] cluster.

It localises to the cytoplasm. It carries out the reaction A + NH4(+) + H2O = hydroxylamine + AH2 + H(+). Functionally, catalyzes the reduction of hydroxylamine to form NH(3) and H(2)O. In Chlorobaculum tepidum (strain ATCC 49652 / DSM 12025 / NBRC 103806 / TLS) (Chlorobium tepidum), this protein is Hydroxylamine reductase.